The sequence spans 102 residues: Small ubiquitin-related modifier 1-A (102 aa).

Residues 1–20 (MSDQEAKPSSEDLGDKKDGG) form a disordered region. Residues 21–98 (DYIKLKVIGQ…IEVYQEQTGG (78 aa)) form the Ubiquitin-like domain. Residue Gly-98 forms a Glycyl lysine isopeptide (Gly-Lys) (interchain with K-? in acceptor proteins) linkage. Residues 99–102 (HSTF) constitute a propeptide that is removed on maturation.

This sequence belongs to the ubiquitin family. SUMO subfamily. Interacts with sae2, ube2i, ranbp2, pias1 and pias2. Covalently attached to a number of proteins including rangap1 and ranbp2. Interacts with sox9 and sox10. Cleavage of precursor form by a sentrin-specific protease is necessary for function.

The protein localises to the nucleus membrane. It is found in the nucleus speckle. The protein resides in the cytoplasm. It localises to the nucleus. Its subcellular location is the PML body. The protein localises to the cell membrane. In terms of biological role, ubiquitin-like protein that can be covalently attached to proteins as a monomer or a lysine-linked polymer. Covalent attachment via an isopeptide bond to its substrates requires prior activation by the E1 complex sae1-sae2 and linkage to the E2 enzyme ube2i. This post-translational modification on lysine residues of proteins plays a crucial role in a number of cellular processes such as nuclear transport, DNA replication and repair, mitosis and signal transduction. Polymeric sumo1 chains are also susceptible to polyubiquitination which functions as a signal for proteasomal degradation of modified proteins. The chain is Small ubiquitin-related modifier 1-A (sumo1-a) from Xenopus laevis (African clawed frog).